An 81-amino-acid polypeptide reads, in one-letter code: UPF0729 protein C18orf32 homolog (81 aa).

Residues 45–58 show a composition bias toward polar residues; that stretch reads AASDQKVSEKSNGT. The interval 45–81 is disordered; that stretch reads AASDQKVSEKSNGTCKPESNGEATANGSTIAADKKTD.

The protein belongs to the UPF0729 family.

The sequence is that of UPF0729 protein C18orf32 homolog from Anoplopoma fimbria (Sablefish).